Consider the following 359-residue polypeptide: MLENRVKTKQIFIGGVAIGGDAPISTQSMTFSKTADIESTKNQIDRLKLAGADLVRVAVSNEKDALALKELKKVSPLPLIADIHFHYKFALIAAQSVDAIRINPGNIGSKDKIKAVVDACKEKNIPIRIGVNAGSLEKQFDQKYGPTPKGMVESALYNAKLLEDLDFTNFKISLKASDVMRTIEAYRMLRPLVIYPFHLGVTEAGNLFSSSIKSAMALGGLLMEGIGDTMRVSITGELENEIKVARAILRHSGRLKEGINWISCPTCGRIEANLVDMASKVEKRLSHIKTPLDISVMGCVVNALGEAKHADMAIAFGNRSGLIIKEGKVIHKLAEKDLFETFVIEVENLAKEREKSLKD.

[4Fe-4S] cluster contacts are provided by C264, C267, C299, and E306.

The protein belongs to the IspG family. [4Fe-4S] cluster is required as a cofactor.

The enzyme catalyses (2E)-4-hydroxy-3-methylbut-2-enyl diphosphate + oxidized [flavodoxin] + H2O + 2 H(+) = 2-C-methyl-D-erythritol 2,4-cyclic diphosphate + reduced [flavodoxin]. It functions in the pathway isoprenoid biosynthesis; isopentenyl diphosphate biosynthesis via DXP pathway; isopentenyl diphosphate from 1-deoxy-D-xylulose 5-phosphate: step 5/6. In terms of biological role, converts 2C-methyl-D-erythritol 2,4-cyclodiphosphate (ME-2,4cPP) into 1-hydroxy-2-methyl-2-(E)-butenyl 4-diphosphate. This is 4-hydroxy-3-methylbut-2-en-1-yl diphosphate synthase (flavodoxin) from Helicobacter pylori (strain G27).